We begin with the raw amino-acid sequence, 201 residues long: Small ribosomal subunit protein uS5 (201 aa).

Residues 1–27 (MAGPQRRGSGAGGGERRDRKGRDGGAA) form a disordered region. The segment covering 14 to 23 (GERRDRKGRD) has biased composition (basic and acidic residues). The S5 DRBM domain maps to 34–97 (YVERVVAINR…EEAKKHFFKV (64 aa)).

This sequence belongs to the universal ribosomal protein uS5 family. Part of the 30S ribosomal subunit. Contacts proteins S4 and S8.

With S4 and S12 plays an important role in translational accuracy. In terms of biological role, located at the back of the 30S subunit body where it stabilizes the conformation of the head with respect to the body. This Streptomyces avermitilis (strain ATCC 31267 / DSM 46492 / JCM 5070 / NBRC 14893 / NCIMB 12804 / NRRL 8165 / MA-4680) protein is Small ribosomal subunit protein uS5.